A 316-amino-acid polypeptide reads, in one-letter code: Glutathione synthetase (316 aa).

Residues K125–E310 enclose the ATP-grasp domain. ATP is bound at residue W151 to G207. 2 residues coordinate Mg(2+): E281 and N283.

This sequence belongs to the prokaryotic GSH synthase family. It depends on Mg(2+) as a cofactor. Mn(2+) serves as cofactor.

The enzyme catalyses gamma-L-glutamyl-L-cysteine + glycine + ATP = glutathione + ADP + phosphate + H(+). It functions in the pathway sulfur metabolism; glutathione biosynthesis; glutathione from L-cysteine and L-glutamate: step 2/2. In Escherichia coli O6:H1 (strain CFT073 / ATCC 700928 / UPEC), this protein is Glutathione synthetase.